Consider the following 203-residue polypeptide: Dephospho-CoA kinase (203 aa).

One can recognise a DPCK domain in the interval 4-201; the sequence is IIGLTGGIGS…RKYLMLARKH (198 aa). Position 12–17 (12–17) interacts with ATP; it reads GSGKTR.

It belongs to the CoaE family.

It localises to the cytoplasm. The enzyme catalyses 3'-dephospho-CoA + ATP = ADP + CoA + H(+). It participates in cofactor biosynthesis; coenzyme A biosynthesis; CoA from (R)-pantothenate: step 5/5. In terms of biological role, catalyzes the phosphorylation of the 3'-hydroxyl group of dephosphocoenzyme A to form coenzyme A. In Nitrosomonas europaea (strain ATCC 19718 / CIP 103999 / KCTC 2705 / NBRC 14298), this protein is Dephospho-CoA kinase.